The chain runs to 127 residues: PanD regulatory factor (127 aa).

An N-acetyltransferase domain is found at 1-127 (MKLTIIRLEK…TAQQGGWEKC (127 aa)). 2 interaction with PanD regions span residues 43–48 (RFNERL) and 66–76 (LRVREVTRRRG). CoA-binding positions include 66 to 68 (LRV) and 72 to 79 (TRRRGVGQ).

This sequence belongs to the PanZ/PanM family. In terms of assembly, interacts with PanD in the presence of CoA. Forms a heterooctameric complex composed of four PanD subunits and four PanZ subunits. Monomer in solution.

Its activity is regulated as follows. Activation of PanD processing occurs even at low CoA concentrations. In contrast, full inhibition of PanD catalytic activity only occurs at sufficiently high CoA concentrations. Its function is as follows. Controls both the activation and catalytic activity of PanD in a coenzyme A (CoA)-dependent fashion. Binding of CoA or a derivative to PanZ leads to interaction with PanD, which promotes the processing and activation of pro-PanD, and subsequent substrate-mediated inhibition of the active form of PanD. Inhibition of PanD activity is probably the primary metabolic role of PanZ, allowing negative feedback regulation of pantothenate biosynthesis by CoA. In Escherichia coli (strain K12), this protein is PanD regulatory factor.